The primary structure comprises 374 residues: All-trans-retinol dehydrogenase [NAD(+)] ADH7 (374 aa).

The Zn(2+) site is built by Cys47, His68, Cys98, Cys101, Cys104, Cys112, and Cys174. NAD(+) is bound by residues 199-204, Asp223, Lys228, 292-294, and Arg369; these read GLGGVG and VGA.

The protein belongs to the zinc-containing alcohol dehydrogenase family. Class-IV subfamily. As to quaternary structure, homodimer. It depends on Zn(2+) as a cofactor. In terms of tissue distribution, high expression in the stomach mucosa. Lower expression in eye, thymus, skin and ovary. Very low expression in small intestine, liver and uterus.

It localises to the cytoplasm. The catalysed reaction is a primary alcohol + NAD(+) = an aldehyde + NADH + H(+). It carries out the reaction 10-hydroxydecanoate + NAD(+) = 10-oxodecanoate + NADH + H(+). The enzyme catalyses all-trans-retinol + NAD(+) = all-trans-retinal + NADH + H(+). It catalyses the reaction 9-cis-retinol + NAD(+) = 9-cis-retinal + NADH + H(+). The catalysed reaction is all-trans-3,4-didehydroretinol + NAD(+) = all-trans-3,4-didehydroretinal + NADH + H(+). It carries out the reaction all-trans-4-hydroxyretinol + NAD(+) = all-trans-4-hydroxyretinal + NADH + H(+). The enzyme catalyses all-trans-4-oxoretinol + NAD(+) = all-trans-4-oxoretinal + NADH + H(+). It catalyses the reaction 12-hydroxydodecanoate + NAD(+) = 12-oxododecanoate + NADH + H(+). The catalysed reaction is 16-hydroxyhexadecanoate + NAD(+) = 16-oxohexadecanoate + NADH + H(+). It carries out the reaction hexan-1-ol + NAD(+) = hexanal + NADH + H(+). The enzyme catalyses (E)-hex-2-en-1-ol + NAD(+) = (E)-hex-2-enal + NADH + H(+). It catalyses the reaction (E)-4-hydroxynon-2-en-1-ol + NAD(+) = (E)-4-hydroxynon-2-enal + NADH + H(+). Its activity is regulated as follows. Retinol oxidation is inhibited by the detergent Tween 80. Ethanol inhibits both all-trans-retinol and 9-cis-retinol oxidation. 13-cis-retinol is an effective competitive inhibitor of the 9-cis-retinol oxidation. All-trans-retinoic acid is a powerful inhibitor of all-trans-retinol oxidation. 13-cis-retinoic acid is a powerful inhibitor of all-trans-retinol oxidation. Cimetidine competitively inhibited ethanol oxidation. Functionally, catalyzes the NAD-dependent oxidation of all-trans-retinol, alcohol, aldehyde and omega-hydroxy fatty acids and their derivatives. Oxidizes preferentially all trans-retinol, all-trans-4-hydroxyretinol, 9-cis-retinol, 2-hexenol, and long chain omega-hydroxy fatty acids such as juniperic acid. In vitro can also catalyze the NADH-dependent reduction of all-trans-retinal and aldehydes and their derivatives. Reduces preferentially all trans-retinal, all-trans-4-oxoretinal and hexanal. Catalyzes in the oxidative direction with higher efficiency. Therefore may participate in retinoid metabolism, fatty acid omega-oxidation, and elimination of cytotoxic aldehydes produced by lipid peroxidation. The sequence is that of All-trans-retinol dehydrogenase [NAD(+)] ADH7 (Adh7) from Mus musculus (Mouse).